A 131-amino-acid chain; its full sequence is Large ribosomal subunit protein bL19 (131 aa).

This sequence belongs to the bacterial ribosomal protein bL19 family.

This protein is located at the 30S-50S ribosomal subunit interface and may play a role in the structure and function of the aminoacyl-tRNA binding site. The protein is Large ribosomal subunit protein bL19 of Caulobacter sp. (strain K31).